A 224-amino-acid polypeptide reads, in one-letter code: PKHD-type hydroxylase SO_3913 (224 aa).

The Fe2OG dioxygenase domain occupies 78–176; sequence QFYPPLFNRY…RTSAFMWLQS (99 aa). 3 residues coordinate Fe cation: histidine 96, aspartate 98, and histidine 157. Arginine 167 is a 2-oxoglutarate binding site.

Requires Fe(2+) as cofactor. L-ascorbate serves as cofactor.

This chain is PKHD-type hydroxylase SO_3913, found in Shewanella oneidensis (strain ATCC 700550 / JCM 31522 / CIP 106686 / LMG 19005 / NCIMB 14063 / MR-1).